Consider the following 1009-residue polypeptide: MYRRENINFSHPPQLKSPPPMSSPLDSNRSYRWTSLTAANNSKFADTPVKETPQKPDMSWWSPSRGDTWRLNAPRGRTLDLVAAFDQCSRQDQLDSPRYANLGRYRRNSEPMQDNEKEVVTTNFIDDSMIEDHEEYEEHDIELGTDFYDPHMIRHHRSSERFEQSLGTGQQIETIHISTRLVPQLKRVPNSDYANDGRGDMKEYGSISKKNETPILDGTPKRPSPLTTRNIHKVDINRMDHLMKTENTVAGFITLTPQVSKVTHKSDFSKHFGQEESVRASPMSRRNRRGTQTIVLPSFDSPASVRKSIPSPGLPTKTDIRSPSSLVKSIANDFEKADFGFHRKIDAAEEIAQLRKRADNSTFDENQNMVSDSAEDNVSNDFVPRISHLEMHPSVHMGISGYAKKNHVPYGESNEEVLYSLPIKKQSRNVDREGMDQTDEILLTPRAITMRQSLPFSDIPEERTCDKIDEMFDFVEVPTGDYDDKTTLERTVDGYAEVKSQKSPNKMIRNRLDLSTNTYQEIEFEKDTTPYMQEFEEDGTGYSASSSGPQFTRSPTLVTPHAGQSVAEYRVSDKEGCAKTEKVVVQKMSQPSALATSTPKGTFAWRNKNQSNAADDSFVSSISNFSAADKINDSKRQISKLIETIEKTRKHIQLAEISLIDAKRAQMVVQELASQRVLLICRERLKLQLDEVRRLQALSVVRHPPPPINRHFKSAMVISNIAIHLNKNFNCRGSFAFIVALKCRTEIEATGVVTLLAHYQTRMHVIHFGEHMHFSNLPVDFVIAMEVYMMRVPEYKAPEKTCAAVLAAKFRNLLVPNSAHRRARNNSVLSNRTVLSMPGYQAPDCDFRFCGKLTLDRDSAGDRQFYLDDVTYPLEGTVKLQSHCSSLPEAIDVEYRGFLYLFDERSPNGEAAWDRYWAMLHRGIIFFWKNPIDEKNQKVPLSQIDLTKCTNQSVEETRNGRDHEFHIELLIDQTPSLLEKRRVVLAAESSDHLASWLNAINDTLFVLRS.

Disordered regions lie at residues 1–29, 272–295, and 539–558; these read MYRR…DSNR, FGQE…QTIV, and GTGY…PTLV. The segment covering 542-557 has biased composition (polar residues); sequence YSASSSGPQFTRSPTL. Residues 626–657 adopt a coiled-coil conformation; that stretch reads SAADKINDSKRQISKLIETIEKTRKHIQLAEI. Residues 892–1005 enclose the PH domain; that stretch reads DVEYRGFLYL…WLNAINDTLF (114 aa).

As to expression, localizes to the surface of the rachis.

Required to maintain the structure of the rachis, the central cytoplasmic core of the syncytial adult gonad. Failure to maintain the rachis leads to premature dissociation of oocytes and thereby impedes oogenesis. The sequence is that of Anillin-like protein 2 (ani-2) from Caenorhabditis elegans.